The primary structure comprises 418 residues: STE20-related kinase adapter protein beta (418 aa).

The 312-residue stretch at 58-369 folds into the Protein kinase domain; sequence YELQVEIGRG…ASSLLSHVFF (312 aa). ATP contacts are provided by residues 64 to 72 and Lys-89; that span reads IGRGFDNLT.

It belongs to the protein kinase superfamily. STE Ser/Thr protein kinase family. STE20 subfamily. In terms of assembly, component of a trimeric complex composed of STK11/LKB1, STRAD (STRADA or STRADB) and CAB39/MO25 (CAB39/MO25alpha or CAB39L/MO25beta): the complex tethers STK11/LKB1 in the cytoplasm and stimulates its catalytic activity. Interacts with BIRC4/XIAP. These two proteins are likely to coexist in a complex with TAK1, TRAF6, TAB1 and TAB2.

The protein localises to the nucleus. It localises to the cytoplasm. Functionally, pseudokinase which, in complex with CAB39/MO25 (CAB39/MO25alpha or CAB39L/MO25beta), binds to and activates STK11/LKB1. Adopts a closed conformation typical of active protein kinases and binds STK11/LKB1 as a pseudosubstrate, promoting conformational change of STK11/LKB1 in an active conformation. The protein is STE20-related kinase adapter protein beta (Stradb) of Mus musculus (Mouse).